The primary structure comprises 751 residues: Palmitoyltransferase ZDHHC8B (751 aa).

Residues 1-13 (MPNSVGKRFKPTK) lie on the Cytoplasmic side of the membrane. A helical transmembrane segment spans residues 14 to 34 (YIPVSTAATLLVGSTTLFFVF). At 35–41 (TCPWLTK) the chain is on the extracellular side. The chain crosses the membrane as a helical span at residues 42-62 (AVSPVVPLYNGIVFLFVLANF). The Cytoplasmic portion of the chain corresponds to 63-148 (SMATFMDPGV…NCIGRRNYRY (86 aa)). In terms of domain architecture, DHHC spans 104 to 154 (KWCATCHFYRPPRCSHCSVCDNCVEEFDHHCPWVNNCIGRRNYRYFFLFLL). C134 functions as the S-palmitoyl cysteine intermediate in the catalytic mechanism. The chain crosses the membrane as a helical span at residues 149–169 (FFLFLLSLSVHMVGVFSFGLL). Residues 170–185 (FVLHHLETLSALHTTV) lie on the Extracellular side of the membrane. A helical transmembrane segment spans residues 186-206 (TLVVMCVTGLFFIPVMGLTGF). Topologically, residues 207–751 (HMVLVARGRT…VGGTTYEISV (545 aa)) are cytoplasmic. Disordered regions lie at residues 293–346 (RSKS…PSTP), 437–461 (CTPLGGTKHETITSTPHRGVFSPGT), 633–659 (RSSASSLVRAPRTSTTSLHTDGGGMNR), 666–685 (RSPVHQSHQSPTSVPRSPSY), and 703–736 (HLGTREDIGQGKVNGQLKGQYGTPSGTPSRHTSV). Positions 326–338 (SQLTSSEESSLSS) are enriched in low complexity. Polar residues-rich tracts occupy residues 633–651 (RSSASSLVRAPRTSTTSLH), 669–681 (VHQSHQSPTSVPR), and 724–733 (GTPSGTPSRH).

The protein belongs to the DHHC palmitoyltransferase family. ERF2/ZDHHC9 subfamily.

The protein localises to the golgi apparatus membrane. It localises to the mitochondrion membrane. The enzyme catalyses L-cysteinyl-[protein] + hexadecanoyl-CoA = S-hexadecanoyl-L-cysteinyl-[protein] + CoA. In terms of biological role, palmitoyltransferase that catalyzes the addition of palmitate onto various protein substrates and therefore function in several unrelated biological processes. In Danio rerio (Zebrafish), this protein is Palmitoyltransferase ZDHHC8B.